A 210-amino-acid polypeptide reads, in one-letter code: Large ribosomal subunit protein bL25 (210 aa).

A disordered region spans residues 179-210; sequence LPPQQEEEIHSGEQQEPGHPDAEEGRETTPES. A compositionally biased stretch (basic and acidic residues) spans 185–210; the sequence is EEIHSGEQQEPGHPDAEEGRETTPES.

This sequence belongs to the bacterial ribosomal protein bL25 family. CTC subfamily. In terms of assembly, part of the 50S ribosomal subunit; part of the 5S rRNA/L5/L18/L25 subcomplex. Contacts the 5S rRNA. Binds to the 5S rRNA independently of L5 and L18.

Functionally, this is one of the proteins that binds to the 5S RNA in the ribosome where it forms part of the central protuberance. The protein is Large ribosomal subunit protein bL25 of Geobacillus sp. (strain WCH70).